Here is a 198-residue protein sequence, read N- to C-terminus: Phosphoheptose isomerase (198 aa).

In terms of domain architecture, SIS spans 36-195; it reads AIEVYQNGNK…EEAIFRNKFV (160 aa). Residue 51–53 participates in substrate binding; sequence NGG. 2 residues coordinate Zn(2+): His-60 and Glu-64. Residues Glu-64, 93-94, 119-121, Ser-124, and Gln-171 contribute to the substrate site; these read ND and STS. Residues Gln-171 and His-179 each contribute to the Zn(2+) site.

The protein belongs to the SIS family. GmhA subfamily. Zn(2+) serves as cofactor.

The protein localises to the cytoplasm. The enzyme catalyses 2 D-sedoheptulose 7-phosphate = D-glycero-alpha-D-manno-heptose 7-phosphate + D-glycero-beta-D-manno-heptose 7-phosphate. It participates in carbohydrate biosynthesis; D-glycero-D-manno-heptose 7-phosphate biosynthesis; D-glycero-alpha-D-manno-heptose 7-phosphate and D-glycero-beta-D-manno-heptose 7-phosphate from sedoheptulose 7-phosphate: step 1/1. The protein operates within cell surface structure biogenesis; S-layer biogenesis. Catalyzes the isomerization of sedoheptulose 7-phosphate in D-glycero-D-manno-heptose 7-phosphate. This is Phosphoheptose isomerase from Aneurinibacillus thermoaerophilus.